The chain runs to 596 residues: Probable lysosomal cobalamin transporter (596 aa).

The next 10 membrane-spanning stretches (helical) occupy residues 7 to 27, 46 to 66, 95 to 115, 145 to 165, 196 to 216, 313 to 333, 350 to 370, 376 to 396, 420 to 440, and 507 to 527; these read AFIW…AAIF, IITL…IALV, IVYY…IPFT, TLFF…APVA, LLIS…LALL, LVGG…MLIT, ILGS…SSIV, VLMA…IAVI, MATV…AMII, and FFGA…LIVF. The disordered stretch occupies residues 566–596; that stretch reads WQDIRGKAKNQTPSRGAAGRGIRGDDDHDDD. Residues 587-596 are compositionally biased toward basic and acidic residues; that stretch reads IRGDDDHDDD.

This sequence belongs to the LIMR family. LMBRD1 subfamily.

It is found in the lysosome membrane. Functionally, probable lysosomal cobalamin transporter. Required to export cobalamin from lysosomes allowing its conversion to cofactors. This chain is Probable lysosomal cobalamin transporter, found in Sclerotinia sclerotiorum (strain ATCC 18683 / 1980 / Ss-1) (White mold).